A 355-amino-acid polypeptide reads, in one-letter code: uncharacterized protein (355 aa).

Position 132-139 (132-139) interacts with ATP; that stretch reads GPPGCGKT.

Belongs to the AAA ATPase family.

It localises to the mitochondrion. This is an uncharacterized protein from Schizosaccharomyces pombe (strain 972 / ATCC 24843) (Fission yeast).